Reading from the N-terminus, the 654-residue chain is Arrestin domain-containing protein C (654 aa).

One can recognise a C2 domain in the interval methionine 1–leucine 105. Residues alanine 616–alanine 647 adopt a coiled-coil conformation.

The protein belongs to the arrestin family.

The protein is Arrestin domain-containing protein C (adcC) of Dictyostelium discoideum (Social amoeba).